The chain runs to 142 residues: Large ribosomal subunit protein uL11 (142 aa).

It belongs to the universal ribosomal protein uL11 family. In terms of assembly, part of the ribosomal stalk of the 50S ribosomal subunit. Interacts with L10 and the large rRNA to form the base of the stalk. L10 forms an elongated spine to which L12 dimers bind in a sequential fashion forming a multimeric L10(L12)X complex. Post-translationally, one or more lysine residues are methylated.

Forms part of the ribosomal stalk which helps the ribosome interact with GTP-bound translation factors. This is Large ribosomal subunit protein uL11 from Nocardioides sp. (strain ATCC BAA-499 / JS614).